The primary structure comprises 828 residues: Deubiquitinase MYSM1 (828 aa).

Residues Met1–Gly12 show a composition bias toward acidic residues. Positions Met1–Val31 are disordered. Ser110 is modified (phosphoserine). One can recognise an SANT domain in the interval Ser116–Val167. Lys187 is covalently cross-linked (Glycyl lysine isopeptide (Lys-Gly) (interchain with G-Cter in SUMO2)). Position 218 is a phosphoserine (Ser218). Thr236 is subject to Phosphothreonine. 3 positions are modified to phosphoserine: Ser242, Ser267, and Ser340. Residues Leu372 to Arg470 enclose the SWIRM domain. The region spanning Val577–Leu709 is the MPN domain. The Zn(2+) site is built by His656, His658, and Asp669. Positions His656 to Asp669 match the JAMM motif motif. Positions Leu774–Leu778 match the LXXLL motif motif.

It belongs to the peptidase M67A family. MYSM1 subfamily. As to quaternary structure, component of a large chromatin remodeling complex, at least composed of MYSM1, PCAF, RBM10 and KIF11/TRIP5. Binds histones. Interacts with NFIL3; this interaction is critical for their correct recruitment to the ID2 locus during natural killer cell maturation.

It is found in the nucleus. The protein resides in the cytoplasm. Metalloprotease with deubiquitinase activity that plays important regulator roles in hematopoietic stem cell function, blood cell production and immune response. Participates in the normal programming of B-cell responses to antigen after the maturation process. Within the cytoplasm, plays critical roles in the repression of innate immunity and autoimmunity. Removes 'Lys-63'-linked polyubiquitins from TRAF3 and TRAF6 complexes. Attenuates NOD2-mediated inflammation and tissue injury by promoting 'Lys-63'-linked deubiquitination of RIPK2 component. Suppresses the CGAS-STING1 signaling pathway by cleaving STING1 'Lys-63'-linked ubiquitin chains. In the nucleus, acts as a hematopoietic transcription regulator derepressing a range of genes essential for normal stem cell differentiation including EBF1 and PAX5 in B-cells, ID2 in NK-cell progenitor or FLT3 in dendritic cell precursors. Deubiquitinates monoubiquitinated histone H2A, a specific tag for epigenetic transcriptional repression, leading to dissociation of histone H1 from the nucleosome. This chain is Deubiquitinase MYSM1 (MYSM1), found in Homo sapiens (Human).